A 104-amino-acid polypeptide reads, in one-letter code: Large ribosomal subunit protein bL21 (104 aa).

The protein belongs to the bacterial ribosomal protein bL21 family. Part of the 50S ribosomal subunit. Contacts protein L20.

This protein binds to 23S rRNA in the presence of protein L20. This is Large ribosomal subunit protein bL21 from Streptococcus pneumoniae serotype 2 (strain D39 / NCTC 7466).